The following is a 205-amino-acid chain: StAR-related lipid transfer protein 4 (205 aa).

The 205-residue stretch at 1-205 folds into the START domain; that stretch reads MEGLSDVASF…NFYGDLRKAL (205 aa).

It catalyses the reaction cholesterol(in) = cholesterol(out). Involved in the intracellular transport of cholesterol. Binds cholesterol or other sterols. This Homo sapiens (Human) protein is StAR-related lipid transfer protein 4 (STARD4).